A 469-amino-acid chain; its full sequence is Cytosolic beta-glucosidase (469 aa).

Residues Q17, H120, and N164 each contribute to the substrate site. The active-site Proton donor is E165. Y309 lines the substrate pocket. The active-site Nucleophile is the E373. Substrate contacts are provided by residues W417 and E424–W425.

The protein belongs to the glycosyl hydrolase 1 family. Klotho subfamily. May interact with NEU2. The N-terminus is blocked. In terms of tissue distribution, present in small intestine (at protein level). Expressed in liver, small intestine, colon, spleen and kidney. Down-regulated in renal cell carcinomas and hepatocellular carcinomas.

Its subcellular location is the cytoplasm. It localises to the cytosol. It catalyses the reaction Hydrolysis of terminal, non-reducing beta-D-glucosyl residues with release of beta-D-glucose.. It carries out the reaction a beta-D-glucosyl-(1&lt;-&gt;1')-N-acylsphing-4-enine + H2O = an N-acylsphing-4-enine + D-glucose. The enzyme catalyses a beta-D-galactosyl-(1&lt;-&gt;1')-N-acylsphing-4-enine + H2O = an N-acylsphing-4-enine + D-galactose. The catalysed reaction is beta-D-glucosyl-(1&lt;-&gt;1)-sphing-4-enine + H2O = sphing-4-enine + D-glucose. It catalyses the reaction beta-D-glucosyl-(1&lt;-&gt;1)-N-octadecanoylsphing-4-enine + H2O = N-octadecanoylsphing-4-enine + D-glucose. It carries out the reaction beta-D-galactosyl-(1&lt;-&gt;1)-sphing-4-enine + H2O = sphing-4-enine + D-galactose. The enzyme catalyses beta-D-galactosyl-(1&lt;-&gt;1')-N-octadecanoylsphing-4-enine + H2O = N-octadecanoylsphing-4-enine + D-galactose. The catalysed reaction is a beta-D-xylosyl-(1&lt;-&gt;1')-N-acylsphing-4-enine + cholesterol = cholesteryl 3-beta-D-xyloside + an N-acylsphing-4-enine. Its activity is regulated as follows. Inhibited by 2,4-dinitrophenyl-2-fluoro-2-deoxy-beta-D-glucopyranoside. Inhibited by sodium taurocholate. Inhibited by alpha-1-C-nonyl-DIX/AnDIX. The glucosylceramidase activity is slightly inhibited by conduritol B epoxide/CBE while the galactosylceramidase activity is not. Neutral cytosolic beta-glycosidase with a broad substrate specificity that could play a role in the catabolism of glycosylceramides. Has a significant glucosylceramidase activity in vitro. However, that activity is relatively low and its significance in vivo is not clear. Hydrolyzes galactosylceramides/GalCers, glucosylsphingosines/GlcSphs and galactosylsphingosines/GalSphs. However, the in vivo relevance of these activities is unclear. It can also hydrolyze a broad variety of dietary glycosides including phytoestrogens, flavonols, flavones, flavanones and cyanogens in vitro and could therefore play a role in the metabolism of xenobiotics. Possesses transxylosylase activity in vitro using xylosylated ceramides/XylCers (such as beta-D-xylosyl-(1&lt;-&gt;1')-N-acylsphing-4-enine) as xylosyl donors and cholesterol as acceptor. Could also play a role in the catabolism of cytosolic sialyl free N-glycans. The polypeptide is Cytosolic beta-glucosidase (Homo sapiens (Human)).